Here is a 164-residue protein sequence, read N- to C-terminus: HTH-type transcriptional regulator IscR (164 aa).

Positions R2–N131 constitute an HTH rrf2-type domain. Positions L28–K51 form a DNA-binding region, H-T-H motif. Positions 92, 98, and 104 each coordinate [2Fe-2S] cluster. A metal cation-binding residues include C92, C98, and C104. Residues D145–A164 form a disordered region. Residues G152–A164 show a composition bias toward polar residues.

Requires [2Fe-2S] cluster as cofactor.

In terms of biological role, regulates the transcription of several operons and genes involved in the biogenesis of Fe-S clusters and Fe-S-containing proteins. The chain is HTH-type transcriptional regulator IscR from Serratia proteamaculans (strain 568).